A 380-amino-acid polypeptide reads, in one-letter code: Glucose-1-phosphate adenylyltransferase (380 aa).

Residues tyrosine 99, glycine 164, 179 to 180, and serine 190 each bind alpha-D-glucose 1-phosphate; that span reads EK.

This sequence belongs to the bacterial/plant glucose-1-phosphate adenylyltransferase family. In terms of assembly, homotetramer.

It catalyses the reaction alpha-D-glucose 1-phosphate + ATP + H(+) = ADP-alpha-D-glucose + diphosphate. Its pathway is glycan biosynthesis; glycogen biosynthesis. In terms of biological role, involved in the biosynthesis of ADP-glucose, a building block required for the elongation reactions to produce glycogen. Catalyzes the reaction between ATP and alpha-D-glucose 1-phosphate (G1P) to produce pyrophosphate and ADP-Glc. The sequence is that of Glucose-1-phosphate adenylyltransferase from Bacillus subtilis (strain 168).